A 1296-amino-acid chain; its full sequence is MDSLDHMLTDPLELGPCGDGHSTGIMEDCLLGGTRVSLPEDLLEDPEIFFDVVSLSTWQEVLSDSQREHLQQFLPRFPADSVEQQRELILALFSGENFRFGNPLHIAQKLFRDGHFNPEVVKYRQLCFKSQYKRYLNSQQQYFHRLLKQILASRSDLLEMARRSGPALPFPHKHHSPSRSPEEREWRTQQRYLKVLREVKEECGDTALSSDEEDLSSWLPSSPARSPSPAVPLRVVPTLSTTDMKTADKIELGDSDLKLMLKKHHEKRKHQPDHPDLLTGDLTLSDIMTRVNAGRKGSLAALYDLAVLKKKVKEKEEKKKKKIKLIKSEAEDLAEPLSSTEGVPTLSQAPSPLAISSIKEEPLEDIKPCLGINEISSSFFSLLLEILLLESQASLPMLEDRVLDWQSSPASSLNSWFSAAPNWAELVLPALQYLAGESRAVPSSFSPFVEFKEKTQQWKLLGQSQDNEKELAALFHLWLETKDQAFCKENEDSSDAMTPVPRVRTDYVVRPSTGEEKRVFQEQERYRYSQPHKAFTFRMHGFESVVGPVKGVFDKETSLNKAREHSLLRSDRPAYVTILSLVRDAAARLPNGEGTRAEICELLKDSQFLAPDVTSTQVNTVVSGALDRLHYEKDPCVKYDIGRKLWIYLHRDRSEEEFERIHQAQAAAAKARKALQQKPKPPSKVKSSNKEGSTKGLSGPSEQSQMSLSDSSMPPTPVTPVTPTTPALPTPISPPPVSAVNRSGSSTVSEPAQSSSGVLLVSSPTMPQLGTMLSPASIQTPPSSQATARVVSHSSSAGLPQVRVVAQPSLPAVSQQSVGPAQPLPQMPAGPQIRVPVTATQTKVVPQAVMATVPVKGQTAAASVQRPGPGQTGLTVTNLPAAVSPVSKTAMSSPGNSAPSASTTAVIQNVTGQNIIKQVSITGQLGVKPQTGSSIPLTATNFRIQGKDVLRLPPSSITTDAKGQTVLRITPDMMATLAKSQVTTVKLTQDLFGAGSGTAGKGISATLHVTSNPVHAADSPAKAPSASVPSSAPAGTTVVKVTPDLKPTETANSAFRLMPALGVSVADQKGKNTVASSEAKPAATIRIVQGLGVMPPKAGQTITVAAHAKQGASVAGGSGTVHSSTVSLPSINAAVSKTVAVASGATSTPISIGTGAPTVRQVPVNTTVVSTSQSGKLPTRITVPLSVISQPMKGKSVVTAPIIKGNLGANLSGLGRNIILTTMPAGTKLIAGNKPVSFLTAQQLQQLQQQGQATQVRIQTVPASHLQQGTASGSSKAVSTVVVTTAPSPKQAPEQQ.

A DEUBAD domain is found at 39–156; sequence PEDLLEDPEI…LKQILASRSD (118 aa). Disordered stretches follow at residues 165–186 and 204–232; these read GPALPFPHKHHSPSRSPEEREW and GDTALSSDEEDLSSWLPSSPARSPSPAVP. Low complexity predominate over residues 216–232; that stretch reads SSWLPSSPARSPSPAVP. Phosphoserine is present on residues Ser-228 and Ser-298. Lys-327 is covalently cross-linked (Glycyl lysine isopeptide (Lys-Gly) (interchain with G-Cter in SUMO2)). Ser-351 is modified (phosphoserine). Residues 370 to 495 are winged-helix like domain; sequence LGINEISSSF…FCKENEDSSD (126 aa). Residue Lys-469 forms a Glycyl lysine isopeptide (Lys-Gly) (interchain with G-Cter in SUMO2) linkage. Residue Lys-488 forms a Glycyl lysine isopeptide (Lys-Gly) (interchain with G-Cter in SUMO1); alternate linkage. Lys-488 is covalently cross-linked (Glycyl lysine isopeptide (Lys-Gly) (interchain with G-Cter in SUMO2); alternate). 2 disordered regions span residues 663 to 758 and 1015 to 1036; these read QAQA…SSGV and HAADSPAKAPSASVPSSAPAGT. The span at 700–713 shows a compositional bias: low complexity; sequence PSEQSQMSLSDSSM. Residues 726–737 show a composition bias toward pro residues; that stretch reads PALPTPISPPPV. Polar residues predominate over residues 741–758; the sequence is NRSGSSTVSEPAQSSSGV. Residues 1016-1034 show a composition bias toward low complexity; sequence AADSPAKAPSASVPSSAPA. Ser-1019 is subject to Phosphoserine. The residue at position 1234 (Lys-1234) is an N6-acetyllysine. Residue Ser-1288 is modified to Phosphoserine.

The protein belongs to the NFRKB family. As to quaternary structure, component of the chromatin remodeling INO80 complex; specifically part of a complex module associated with the N-terminus of INO80. Interacts with UCHL5.

The protein resides in the nucleus. In terms of biological role, binds to the DNA consensus sequence 5'-GGGGAATCTCC-3'. Its function is as follows. Putative regulatory component of the chromatin remodeling INO80 complex which is involved in transcriptional regulation, DNA replication and probably DNA repair. Modulates the deubiquitinase activity of UCHL5 in the INO80 complex. The sequence is that of Nuclear factor related to kappa-B-binding protein (Nfrkb) from Mus musculus (Mouse).